The chain runs to 482 residues: Anaerobic nitric oxide reductase flavorubredoxin (482 aa).

Residues 30–210 (LRGSSYNSYL…PFSRLVTPKI (181 aa)) form a zinc metallo-hydrolase region. Fe cation contacts are provided by H79, E81, D83, H147, D166, and H227. A Flavodoxin-like domain is found at 254-393 (ITIFYDTMSN…LCRQHGRDIA (140 aa)). Residues 260–264 (TMSNN) and 342–369 (AFGS…EMSL) each bind FMN. Residues 426–477 (GPMMQCSVCQWVYDPAKGEPNQDVQPGTPWSEVPDNFLCPECSLGKDVFDVL) form the Rubredoxin-like domain. Fe cation contacts are provided by C431, C434, C464, and C467.

The protein in the N-terminal section; belongs to the zinc metallo-hydrolase group 3 family. In terms of assembly, homotetramer. It depends on Fe cation as a cofactor. FMN is required as a cofactor.

It is found in the cytoplasm. It functions in the pathway nitrogen metabolism; nitric oxide reduction. Anaerobic nitric oxide reductase; uses NADH to detoxify nitric oxide (NO), protecting several 4Fe-4S NO-sensitive enzymes. Has at least 2 reductase partners, only one of which (NorW, flavorubredoxin reductase) has been identified. NO probably binds to the di-iron center; electrons enter from the NorW at rubredoxin and are transferred sequentially to the FMN center and the di-iron center. Also able to function as an aerobic oxygen reductase. The sequence is that of Anaerobic nitric oxide reductase flavorubredoxin from Klebsiella pneumoniae subsp. pneumoniae (strain ATCC 700721 / MGH 78578).